The chain runs to 149 residues: uncharacterized protein (149 aa).

The segment at 1–103 (MFGLKVKNAE…SPTQGSRLRH (103 aa)) is disordered. Positions 7 to 18 (KNAEADTAKSNE) are enriched in basic and acidic residues. Residues 26–41 (TGSSTTSGSGQSTQRG) show a composition bias toward low complexity. Polar residues predominate over residues 61–72 (GSQGNSGDQGTE).

Belongs to the adhesin P1 family.

This is an uncharacterized protein from Mycoplasma pneumoniae (strain ATCC 29342 / M129 / Subtype 1) (Mycoplasmoides pneumoniae).